Consider the following 197-residue polypeptide: Large ribosomal subunit protein bL25 (197 aa).

Belongs to the bacterial ribosomal protein bL25 family. CTC subfamily. As to quaternary structure, part of the 50S ribosomal subunit; part of the 5S rRNA/L5/L18/L25 subcomplex. Contacts the 5S rRNA. Binds to the 5S rRNA independently of L5 and L18.

Its function is as follows. This is one of the proteins that binds to the 5S RNA in the ribosome where it forms part of the central protuberance. This is Large ribosomal subunit protein bL25 from Carboxydothermus hydrogenoformans (strain ATCC BAA-161 / DSM 6008 / Z-2901).